A 156-amino-acid chain; its full sequence is Anaerobic ribonucleoside-triphosphate reductase-activating protein (156 aa).

Residues C26, C30, and C33 each coordinate [4Fe-4S] cluster. S-adenosyl-L-methionine-binding positions include 32-34 (GCY) and G72.

Belongs to the organic radical-activating enzymes family. As to quaternary structure, forms a tetramer composed of two NrdD and two NrdG subunits. It depends on [4Fe-4S] cluster as a cofactor.

It carries out the reaction glycyl-[protein] + reduced [flavodoxin] + S-adenosyl-L-methionine = glycin-2-yl radical-[protein] + semiquinone [flavodoxin] + 5'-deoxyadenosine + L-methionine + H(+). In terms of biological role, activation of anaerobic ribonucleoside-triphosphate reductase under anaerobic conditions by generation of an organic free radical, using S-adenosylmethionine and reduced flavodoxin as cosubstrates to produce 5'-deoxy-adenosine. This is Anaerobic ribonucleoside-triphosphate reductase-activating protein (NRDG) from Escherichia coli (Bacteriophage T4).